Reading from the N-terminus, the 158-residue chain is Cyclic pyranopterin monophosphate synthase (158 aa).

Residues 75 to 77 and 113 to 114 contribute to the substrate site; these read LCH and ME. Residue Asp128 is part of the active site.

It belongs to the MoaC family. Homohexamer; trimer of dimers.

The catalysed reaction is (8S)-3',8-cyclo-7,8-dihydroguanosine 5'-triphosphate = cyclic pyranopterin phosphate + diphosphate. It participates in cofactor biosynthesis; molybdopterin biosynthesis. Its function is as follows. Catalyzes the conversion of (8S)-3',8-cyclo-7,8-dihydroguanosine 5'-triphosphate to cyclic pyranopterin monophosphate (cPMP). This Roseiflexus castenholzii (strain DSM 13941 / HLO8) protein is Cyclic pyranopterin monophosphate synthase.